A 177-amino-acid polypeptide reads, in one-letter code: Large ribosomal subunit protein uL6 (177 aa).

This sequence belongs to the universal ribosomal protein uL6 family. In terms of assembly, part of the 50S ribosomal subunit.

This protein binds to the 23S rRNA, and is important in its secondary structure. It is located near the subunit interface in the base of the L7/L12 stalk, and near the tRNA binding site of the peptidyltransferase center. This chain is Large ribosomal subunit protein uL6, found in Herminiimonas arsenicoxydans.